The primary structure comprises 324 residues: dITP/XTP pyrophosphatase (324 aa).

Positions 1-126 (MTKSIFEYKD…SDNKSDFGDV (126 aa)) are unknown. The segment at 127–324 (LLIATRNEGK…EVFPAWQNKQ (198 aa)) is NTP pyrophosphatase. 131–136 (TRNEGK) is a substrate binding site. The active-site Proton acceptor is the Asp-193. Asp-193 is a Mg(2+) binding site. Residues Ser-194, 277–280 (FGYD), Lys-300, and 305–306 (HR) contribute to the substrate site.

Belongs to the HAM1 NTPase family. In terms of assembly, homodimer. Mg(2+) serves as cofactor.

It catalyses the reaction XTP + H2O = XMP + diphosphate + H(+). The catalysed reaction is dITP + H2O = dIMP + diphosphate + H(+). It carries out the reaction ITP + H2O = IMP + diphosphate + H(+). Pyrophosphatase that catalyzes the hydrolysis of nucleoside triphosphates to their monophosphate derivatives, with a high preference for the non-canonical purine nucleotides XTP (xanthosine triphosphate), dITP (deoxyinosine triphosphate) and ITP. Seems to function as a house-cleaning enzyme that removes non-canonical purine nucleotides from the nucleotide pool, thus preventing their incorporation into DNA/RNA and avoiding chromosomal lesions. This is dITP/XTP pyrophosphatase from Streptococcus thermophilus (strain CNRZ 1066).